We begin with the raw amino-acid sequence, 209 residues long: Zinc finger SWIM domain-containing protein sws1 (209 aa).

The span at 1–30 (MQQGHFTSNSYHSKTLNSSSLPVSSKFSHT) shows a compositional bias: polar residues. The disordered stretch occupies residues 1–33 (MQQGHFTSNSYHSKTLNSSSLPVSSKFSHTNDP). The SWIM-type zinc finger occupies 143-203 (TTIDLKYWYC…HILAASILRA (61 aa)).

Interacts with rdl1, rlp1 and srs2.

It is found in the cytoplasm. The protein resides in the nucleus. The protein localises to the nucleoplasm. In terms of biological role, involved in early stages of the homologous recombination repair (HRR) pathway of double-stranded DNA breaks arising during DNA replication or induced by DNA-damaging agents. The sequence is that of Zinc finger SWIM domain-containing protein sws1 (sws1) from Schizosaccharomyces pombe (strain 972 / ATCC 24843) (Fission yeast).